The chain runs to 508 residues: Mevalonate kinase ERG12 (508 aa).

Residues 1–46 (MPPSNPAMVNGLNGSHANGNGNGHNHISDSGSETSGESSNGSGRRR) are disordered. Over residues 10-42 (NGLNGSHANGNGNGHNHISDSGSETSGESSNGS) the composition is skewed to low complexity. ATP is bound by residues lysine 68, serine 200, and 205 to 211 (GAGLGSS). Serine 211 and glutamate 256 together coordinate Mg(2+). Aspartate 267 serves as the catalytic Proton acceptor.

It belongs to the GHMP kinase family. Mevalonate kinase subfamily. Homodimer. Mg(2+) serves as cofactor.

It localises to the cytoplasm. Its subcellular location is the cytosol. It catalyses the reaction (R)-mevalonate + ATP = (R)-5-phosphomevalonate + ADP + H(+). It participates in isoprenoid biosynthesis; isopentenyl diphosphate biosynthesis via mevalonate pathway; isopentenyl diphosphate from (R)-mevalonate: step 1/3. In terms of biological role, mevalonate kinase; part of the second module of ergosterol biosynthesis pathway that includes the middle steps of the pathway. ERG12 converts mevalonate into 5-phosphomevalonate. The second module is carried out in the vacuole and involves the formation of farnesyl diphosphate, which is also an important intermediate in the biosynthesis of ubiquinone, dolichol, heme and prenylated proteins. Activity by the mevalonate kinase ERG12 (FG05912) first converts mevalonate into 5-phosphomevalonate. 5-phosphomevalonate is then further converted to 5-diphosphomevalonate by the phosphomevalonate kinase ERG8 (FG09764). The diphosphomevalonate decarboxylase ERG19 (FG10424) then produces isopentenyl diphosphate. The isopentenyl-diphosphate delta-isomerase IDI1 (FG09722) then catalyzes the 1,3-allylic rearrangement of the homoallylic substrate isopentenyl (IPP) to its highly electrophilic allylic isomer, dimethylallyl diphosphate (DMAPP). Finally the farnesyl diphosphate synthase ERG20 (FG06784) catalyzes the sequential condensation of isopentenyl pyrophosphate with dimethylallyl pyrophosphate, and then with the resultant geranylpyrophosphate to the ultimate product farnesyl pyrophosphate. The sequence is that of Mevalonate kinase ERG12 from Gibberella zeae (strain ATCC MYA-4620 / CBS 123657 / FGSC 9075 / NRRL 31084 / PH-1) (Wheat head blight fungus).